An 83-amino-acid chain; its full sequence is Small ribosomal subunit protein bS16 (83 aa).

The protein belongs to the bacterial ribosomal protein bS16 family.

The polypeptide is Small ribosomal subunit protein bS16 (Verminephrobacter eiseniae (strain EF01-2)).